We begin with the raw amino-acid sequence, 325 residues long: HPr kinase/phosphorylase (325 aa).

Active-site residues include histidine 152 and lysine 173. 167-174 (GESGLGKS) contacts ATP. Serine 174 provides a ligand contact to Mg(2+). The active-site Proton acceptor; for phosphorylation activity. Proton donor; for dephosphorylation activity is aspartate 191. Residues 215 to 224 (LEVRGIGLLD) are important for the catalytic mechanism of both phosphorylation and dephosphorylation. Residue glutamate 216 participates in Mg(2+) binding. The active site involves arginine 258. The interval 279–284 (AVDAGR) is important for the catalytic mechanism of dephosphorylation.

This sequence belongs to the HPrK/P family. Homohexamer. Requires Mg(2+) as cofactor.

It carries out the reaction [HPr protein]-L-serine + ATP = [HPr protein]-O-phospho-L-serine + ADP + H(+). The catalysed reaction is [HPr protein]-O-phospho-L-serine + phosphate + H(+) = [HPr protein]-L-serine + diphosphate. Functionally, catalyzes the ATP- as well as the pyrophosphate-dependent phosphorylation of a specific serine residue in HPr, a phosphocarrier protein of the phosphoenolpyruvate-dependent sugar phosphotransferase system (PTS). HprK/P also catalyzes the pyrophosphate-producing, inorganic phosphate-dependent dephosphorylation (phosphorolysis) of seryl-phosphorylated HPr (P-Ser-HPr). This is HPr kinase/phosphorylase from Leptothrix cholodnii (strain ATCC 51168 / LMG 8142 / SP-6) (Leptothrix discophora (strain SP-6)).